A 256-amino-acid polypeptide reads, in one-letter code: 1-(5-phosphoribosyl)-5-[(5-phosphoribosylamino)methylideneamino] imidazole-4-carboxamide isomerase (256 aa).

Aspartate 9 (proton acceptor) is an active-site residue. The active-site Proton donor is aspartate 130.

The protein belongs to the HisA/HisF family.

The protein resides in the cytoplasm. It catalyses the reaction 1-(5-phospho-beta-D-ribosyl)-5-[(5-phospho-beta-D-ribosylamino)methylideneamino]imidazole-4-carboxamide = 5-[(5-phospho-1-deoxy-D-ribulos-1-ylimino)methylamino]-1-(5-phospho-beta-D-ribosyl)imidazole-4-carboxamide. Its pathway is amino-acid biosynthesis; L-histidine biosynthesis; L-histidine from 5-phospho-alpha-D-ribose 1-diphosphate: step 4/9. The sequence is that of 1-(5-phosphoribosyl)-5-[(5-phosphoribosylamino)methylideneamino] imidazole-4-carboxamide isomerase from Prochlorococcus marinus (strain SARG / CCMP1375 / SS120).